The sequence spans 173 residues: Membrane protein PM19L (173 aa).

The next 4 helical transmembrane spans lie at 9 to 29, 43 to 63, 83 to 103, and 124 to 144; these read IAPL…FASW, GVAG…AGVV, LAAG…AFGL, and FVII…GGLF.

Expressed in roots, leaf blades, leaf sheaths, stems, spikelets and embryos.

The protein localises to the membrane. Functionally, may be involved in abiotic stress response through abscisic acid-dependent signaling. The chain is Membrane protein PM19L from Oryza sativa subsp. japonica (Rice).